Here is a 350-residue protein sequence, read N- to C-terminus: Heat-inducible transcription repressor HrcA (350 aa).

It belongs to the HrcA family.

Its function is as follows. Negative regulator of class I heat shock genes (grpE-dnaK-dnaJ and groELS operons). Prevents heat-shock induction of these operons. The polypeptide is Heat-inducible transcription repressor HrcA (Methylococcus capsulatus (strain ATCC 33009 / NCIMB 11132 / Bath)).